A 727-amino-acid polypeptide reads, in one-letter code: Phenylalanine ammonia-lyase str11 (727 aa).

Y105 serves as the catalytic Proton donor/acceptor. The 5-imidazolinone (Ala-Gly) cross-link spans 210–212 (ASG). S211 is modified (2,3-didehydroalanine (Ser)). N271, Q361, R367, N397, K468, E496, and N499 together coordinate (E)-cinnamate.

It belongs to the PAL/histidase family. In terms of processing, contains an active site 4-methylidene-imidazol-5-one (MIO), which is formed autocatalytically by cyclization and dehydration of residues Ala-Ser-Gly.

The enzyme catalyses L-phenylalanine = (E)-cinnamate + NH4(+). It functions in the pathway mycotoxin biosynthesis. Phenylalanine ammonia-lyase; part of the gene cluster that mediates the biosynthesis of strobilurin A, an antifungal polyketide that contains a key beta-methoxyacrylate toxophore that targets the complex III of the mitochondrial electron transport chain. Strobilurin biosynthesis begins with construction of benzoyl CoA by step-wise elimination of ammonia from phenylalanine by the phenylalanine ammonia-lyase str11, oxygenation by str8 and retro-Claisen reaction to form benzoic acid, which is activated to its CoA thiolester benzoyl CoA by the dedicated CoA ligase str10. Benzoyl CoA forms the starter unit for the highly reducing polyketide synthase stpks1 that produces the polyketide prestrobilutin A. The FAD-dependent oxygenase str9 then catalyzes the key oxidative rearrangement responsible for the creation of the beta-methoxyacrylate toxophore. Str9 performs epoxidation of the 2,3 olefin of prestrobilutin A, followed by Meinwald rearrangement to furnish the aldehyde intermediate. Rapid enolization of the aldehyde intermediate would give the beta-methoxyacrylate skeleton and methylations catalyzed by str2 and str3 complete the synthesis and lead to the production of strobilurin A. The short-chain dehydrogenase stl2 and the dehydrogenase str4 play a role in the shunt pathway leading to the production of bolineol. The cluster encodes no obvious halogenase gene that could be involved in production of strobilurin B, nor any obvious dimethylallyl-transferase that could be involved in the production of strobilurin G. It is possible that unknown proteins encoded in, or near, the cluster (such as str1 or stl1) may form new classes of halogenases or dimethylally-transferases, or that the responsible genes are located elsewhere on the genome. Similarly, proteins encoded by str5/str6 hydrolases appear to have no chemical role in the biosynthesis of strobilurin A. Finally, no obvious self-resistance gene is found within the cluster. This Strobilurus tenacellus protein is Phenylalanine ammonia-lyase str11.